Here is a 227-residue protein sequence, read N- to C-terminus: 2,3-bisphosphoglycerate-dependent phosphoglycerate mutase (227 aa).

Residues 7–14 (RHGFSEWN), 20–21 (TG), Arg-59, 86–89 (ERHY), Lys-97, 113–114 (RR), and 182–183 (GN) each bind substrate. His-8 functions as the Tele-phosphohistidine intermediate in the catalytic mechanism. Residue Glu-86 is the Proton donor/acceptor of the active site.

This sequence belongs to the phosphoglycerate mutase family. BPG-dependent PGAM subfamily. As to quaternary structure, homodimer.

It carries out the reaction (2R)-2-phosphoglycerate = (2R)-3-phosphoglycerate. The protein operates within carbohydrate degradation; glycolysis; pyruvate from D-glyceraldehyde 3-phosphate: step 3/5. Functionally, catalyzes the interconversion of 2-phosphoglycerate and 3-phosphoglycerate. In Haemophilus influenzae (strain 86-028NP), this protein is 2,3-bisphosphoglycerate-dependent phosphoglycerate mutase.